Here is a 389-residue protein sequence, read N- to C-terminus: MANLHALRREQRAQGPATIMAIGTATPPNLYEQSTFPDFYFRVTNSDDKQELKKKFRRMCEKTMVKKRYLHLTEEILKERPKLCSYKEASFDDRQDIVVEEIPRLAKEAAEKAIKEWGRPKSEITHLVFCSISGIDMPGADYRLATLLGLPLTVNRLMIYSQACHMGAAMLRIAKDLAENNRGARVLVVACEITVLSFRGPNEGDFEALAGQAGFGDGAGAVVVGADPLEGIEKPIYEIAAAMQETVAESQGAVGGHLRAFGWTFYFLNQLPAIIADNLGRSLERALAPLGVREWNDVFWVAHPGNWAIIDAIEAKLQLSPDKLSTARHVFTEYGNMQSATVYFVMDELRKRSAVEGRSTTGDGLQWGVLLGFGPGLSIETVVLRSMPL.

Residue cysteine 164 is part of the active site.

The protein belongs to the thiolase-like superfamily. Chalcone/stilbene synthases family. Homodimer. As to expression, expressed in both the leaf and rhizome, with higher expression in the rhizome.

It catalyses the reaction (E)-feruloylacetyl-CoA + (E)-feruloyl-CoA + H2O = curcumin + CO2 + 2 CoA. It participates in secondary metabolite biosynthesis; flavonoid biosynthesis. Its function is as follows. Catalyzes the synthesis of curcumin by condensing feruloyl-CoA with a diketide-CoA in the curcuminoid biosynthesis. This chain is Curcumin synthase 1 (CURS1), found in Curcuma longa (Turmeric).